Here is a 397-residue protein sequence, read N- to C-terminus: Exodeoxyribonuclease 7 large subunit (397 aa).

The protein belongs to the XseA family. As to quaternary structure, heterooligomer composed of large and small subunits.

It localises to the cytoplasm. It catalyses the reaction Exonucleolytic cleavage in either 5'- to 3'- or 3'- to 5'-direction to yield nucleoside 5'-phosphates.. Functionally, bidirectionally degrades single-stranded DNA into large acid-insoluble oligonucleotides, which are then degraded further into small acid-soluble oligonucleotides. The polypeptide is Exodeoxyribonuclease 7 large subunit (Anaplasma marginale (strain St. Maries)).